The chain runs to 108 residues: Nucleoid-associated protein Avin_19840 (108 aa).

This sequence belongs to the YbaB/EbfC family. As to quaternary structure, homodimer.

The protein localises to the cytoplasm. The protein resides in the nucleoid. Functionally, binds to DNA and alters its conformation. May be involved in regulation of gene expression, nucleoid organization and DNA protection. In Azotobacter vinelandii (strain DJ / ATCC BAA-1303), this protein is Nucleoid-associated protein Avin_19840.